The following is a 288-amino-acid chain: Keratin-associated protein 5-4 (288 aa).

Repeat copies occupy residues 49 to 52, 55 to 58, 61 to 64, 201 to 204, 220 to 223, 239 to 242, 249 to 252, 268 to 271, and 278 to 281. The interval 49–281 is 9 X 4 AA repeats of C-C-X-P; the sequence is CCVPICCCKP…CCSQSSCCVP (233 aa).

Belongs to the KRTAP type 5 family. As to quaternary structure, interacts with hair keratins. As to expression, restricted to hair root, not detected in any other tissues.

In terms of biological role, in the hair cortex, hair keratin intermediate filaments are embedded in an interfilamentous matrix, consisting of hair keratin-associated protein (KRTAP), which are essential for the formation of a rigid and resistant hair shaft through their extensive disulfide bond cross-linking with abundant cysteine residues of hair keratins. The matrix proteins include the high-sulfur and high-glycine-tyrosine keratins. The sequence is that of Keratin-associated protein 5-4 (KRTAP5-4) from Homo sapiens (Human).